The sequence spans 192 residues: Fe/S biogenesis protein NfuA (192 aa).

Positions 149 and 152 each coordinate [4Fe-4S] cluster.

The protein belongs to the NfuA family. Homodimer. [4Fe-4S] cluster serves as cofactor.

Its function is as follows. Involved in iron-sulfur cluster biogenesis. Binds a 4Fe-4S cluster, can transfer this cluster to apoproteins, and thereby intervenes in the maturation of Fe/S proteins. Could also act as a scaffold/chaperone for damaged Fe/S proteins. In Shewanella loihica (strain ATCC BAA-1088 / PV-4), this protein is Fe/S biogenesis protein NfuA.